Reading from the N-terminus, the 739-residue chain is BEL1-like homeodomain protein 2 (739 aa).

Disordered regions lie at residues 23–73 and 143–222; these read SQDY…ESSV and LMNP…NSQT. Residues 41–58 show a composition bias toward polar residues; that stretch reads NFSNGFDRSDSPNLTTQQ. The segment covering 145–155 has biased composition (pro residues); the sequence is NPPPPQQPPSP. Over residues 179–190 the composition is skewed to low complexity; it reads TNTTHHQNYTNH. Residues 316–332 are SR/KY domain; that stretch reads SRYTTAAQELLEEFCSV. Positions 341-378 are disordered; sequence KLGNSSNPNTCGGDGGGSSPSSAGANKEHPPLSASDRI. Positions 376-447 are BELL domain; the sequence is DRIEHQRRKV…CLKDAVAAQL (72 aa). The segment at residues 498-560 is a DNA-binding region (homeobox); that stretch reads AWRPQRGLPE…NARVRLWKPM (63 aa). The segment at 567–627 is disordered; that stretch reads QESKEREREE…TAPDASDADA (61 aa). The span at 576-585 shows a compositional bias: acidic residues; the sequence is EELEENEEDQ. A compositionally biased stretch (basic and acidic residues) spans 586–596; it reads ETKNSNDDKST. The segment covering 597 to 627 has biased composition (low complexity); sequence KSNNNESNFTAVRTTSQTPTTTAPDASDADA.

The protein belongs to the TALE/BELL homeobox family. As to quaternary structure, may form heterodimeric complexes with TALE/KNOX proteins STM, KNAT1/BP, KNAT2 and KNAT5. Interacts with OFP1, OFP2, OFP4 and OFP5. Interacts with KNATM, isoform KNATM-B. Expressed in lateral organs.

The protein localises to the nucleus. Functionally, transcription factor that establishes leaf shape by repressing growth in specific subdomains of the leaf. Negatively regulates knox homeobox gene KNAT1/BP expression. This is BEL1-like homeodomain protein 2 (BLH2) from Arabidopsis thaliana (Mouse-ear cress).